The primary structure comprises 326 residues: Target of rapamycin complex subunit lst8 (326 aa).

WD repeat units follow at residues 1–37 (MNSN…CTRT), 40–80 (HQDS…PVIN), 83–122 (GVSK…LQCQ), 126–165 (QVNA…NEQL), 168–207 (ETDV…GEDL), 218–257 (AHKR…LMTE), and 268–309 (TSRG…REYS).

It belongs to the WD repeat LST8 family. In terms of assembly, part of the mechanistic target of rapamycin complex 1 (mTORC1) which contains MTOR, MLST8 and RPTOR. Component of the mechanistic target of rapamycin complex 2 (mTORC2), consisting in two heterotretramers composed of MTOR, MLST8, RICTOR and MAPKAP1/SIN1.

It is found in the lysosome membrane. Its subcellular location is the cytoplasm. Subunit of both mTORC1 and mTORC2, which regulates cell growth and survival in response to nutrient and hormonal signals. mTORC1 is activated in response to growth factors or amino acids. In response to nutrients, mTORC1 is recruited to the lysosome membrane and promotes protein, lipid and nucleotide synthesis by phosphorylating several substrates, such as ribosomal protein S6 kinase (RPS6KB1 and RPS6KB2) and EIF4EBP1 (4E-BP1). In the same time, it inhibits catabolic pathways by phosphorylating the autophagy initiation components ULK1 and ATG13, as well as transcription factor TFEB, a master regulators of lysosomal biogenesis and autophagy. The mTORC1 complex is inhibited in response to starvation and amino acid depletion. Within mTORC1, MLST8 interacts directly with MTOR and enhances its kinase activity. In nutrient-poor conditions, stabilizes the MTOR-RPTOR interaction and favors RPTOR-mediated inhibition of MTOR activity. As part of the mTORC2 complex, transduces signals from growth factors to pathways involved in proliferation, cytoskeletal organization, lipogenesis and anabolic output. mTORC2 is also activated by growth factors, but seems to be nutrient-insensitive. In response to growth factors, mTORC2 phosphorylates and activates AGC protein kinase family members, including AKT (AKT1, AKT2 and AKT3), PKC (PRKCA, PRKCB and PRKCE) and SGK1. mTORC2 functions upstream of Rho GTPases to regulate the actin cytoskeleton, probably by activating one or more Rho-type guanine nucleotide exchange factors. mTORC2 promotes the serum-induced formation of stress-fibers or F-actin. Within mTORC2, MLST8 acts as a bridge between MAPKAP1/SIN1 and MTOR. The polypeptide is Target of rapamycin complex subunit lst8 (mlst8) (Xenopus tropicalis (Western clawed frog)).